A 303-amino-acid chain; its full sequence is ATP synthase gamma chain (303 aa).

The protein belongs to the ATPase gamma chain family. As to quaternary structure, F-type ATPases have 2 components, CF(1) - the catalytic core - and CF(0) - the membrane proton channel. CF(1) has five subunits: alpha(3), beta(3), gamma(1), delta(1), epsilon(1). CF(0) has three main subunits: a, b and c.

It localises to the cell membrane. Its function is as follows. Produces ATP from ADP in the presence of a proton gradient across the membrane. The gamma chain is believed to be important in regulating ATPase activity and the flow of protons through the CF(0) complex. The chain is ATP synthase gamma chain from Oenococcus oeni (strain ATCC BAA-331 / PSU-1).